The sequence spans 472 residues: Probable glycine dehydrogenase (decarboxylating) subunit 2 (472 aa).

An N6-(pyridoxal phosphate)lysine modification is found at Lys-268.

It belongs to the GcvP family. C-terminal subunit subfamily. As to quaternary structure, the glycine cleavage system is composed of four proteins: P, T, L and H. In this organism, the P 'protein' is a heterodimer of two subunits. Requires pyridoxal 5'-phosphate as cofactor.

The enzyme catalyses N(6)-[(R)-lipoyl]-L-lysyl-[glycine-cleavage complex H protein] + glycine + H(+) = N(6)-[(R)-S(8)-aminomethyldihydrolipoyl]-L-lysyl-[glycine-cleavage complex H protein] + CO2. In terms of biological role, the glycine cleavage system catalyzes the degradation of glycine. The P protein binds the alpha-amino group of glycine through its pyridoxal phosphate cofactor; CO(2) is released and the remaining methylamine moiety is then transferred to the lipoamide cofactor of the H protein. The protein is Probable glycine dehydrogenase (decarboxylating) subunit 2 of Thermoplasma acidophilum (strain ATCC 25905 / DSM 1728 / JCM 9062 / NBRC 15155 / AMRC-C165).